A 172-amino-acid chain; its full sequence is Adenine phosphoribosyltransferase (172 aa).

This sequence belongs to the purine/pyrimidine phosphoribosyltransferase family. As to quaternary structure, homodimer.

The protein resides in the cytoplasm. The catalysed reaction is AMP + diphosphate = 5-phospho-alpha-D-ribose 1-diphosphate + adenine. Its pathway is purine metabolism; AMP biosynthesis via salvage pathway; AMP from adenine: step 1/1. In terms of biological role, catalyzes a salvage reaction resulting in the formation of AMP, that is energically less costly than de novo synthesis. The chain is Adenine phosphoribosyltransferase from Levilactobacillus brevis (strain ATCC 367 / BCRC 12310 / CIP 105137 / JCM 1170 / LMG 11437 / NCIMB 947 / NCTC 947) (Lactobacillus brevis).